The sequence spans 170 residues: Ribosome maturation factor RimM (170 aa).

The PRC barrel domain maps to 98 to 170 (PDEYYWVDLE…LIVVDWDPDF (73 aa)).

It belongs to the RimM family. Binds ribosomal protein uS19.

Its subcellular location is the cytoplasm. Functionally, an accessory protein needed during the final step in the assembly of 30S ribosomal subunit, possibly for assembly of the head region. Essential for efficient processing of 16S rRNA. May be needed both before and after RbfA during the maturation of 16S rRNA. It has affinity for free ribosomal 30S subunits but not for 70S ribosomes. In Xanthomonas campestris pv. campestris (strain 8004), this protein is Ribosome maturation factor RimM.